The following is a 601-amino-acid chain: Glutathione-regulated potassium-efflux system protein KefB (601 aa).

13 consecutive transmembrane segments (helical) span residues 4 to 24 (SDFLLAGVLFLFAAVAAVPLA), 29 to 49 (IGAVLGYLLAGIAIGPWGLGF), 55 to 75 (EILHFSELGVVFLMFIIGLEL), 87 to 107 (IFGVGAAQVLLSAALLAGLLM), 115 to 135 (AAVVGGIGLAMSSTAMALQLM), 152 to 172 (VLLFQDLAVIPALALVPLLAG), 177 to 197 (HFDWMKIGIKVLAFVGMLIGG), 207 to 227 (FIAASGVREVFTAATLLLVLG), 230 to 250 (LFMDALGLSMALGTFIAGVLL), 268 to 288 (GLLLGLFFISVGMSLNLGVLY), 291 to 311 (LLWVVISVVVLVAVKILVLYL), 324 to 344 (MQFAGVLSQGGEFAFVLFSTA), and 356 to 376 (ALLLVTVTLSMMTTPLLMKLV). Residues 400–519 (KPQVIVVGFG…AGVTQFSRET (120 aa)) form the RCK N-terminal domain.

The protein belongs to the monovalent cation:proton antiporter 2 (CPA2) transporter (TC 2.A.37) family. KefB subfamily. As to quaternary structure, interacts with the regulatory subunit KefG.

The protein localises to the cell inner membrane. Functionally, pore-forming subunit of a potassium efflux system that confers protection against electrophiles. Catalyzes K(+)/H(+) antiport. The sequence is that of Glutathione-regulated potassium-efflux system protein KefB from Escherichia coli (strain ATCC 8739 / DSM 1576 / NBRC 3972 / NCIMB 8545 / WDCM 00012 / Crooks).